A 1112-amino-acid chain; its full sequence is Patronin (microtubule-binding protein) homolog (1112 aa).

Residues 165-286 (IDSVDALLFW…VNAFLADLFV (122 aa)) enclose the Calponin-homology (CH) domain. Disordered regions lie at residues 324–358 (AARS…SRMS), 485–504 (EGED…QPSV), 542–566 (MQQQ…PSQL), and 788–834 (NHSE…GSGE). 2 stretches are compositionally biased toward polar residues: residues 345–358 (SHSQ…SRMS) and 489–504 (GTQS…QPSV). Residues 542-557 (MQQQMQQQQQQQAQAQ) show a composition bias toward low complexity. Basic and acidic residues predominate over residues 802-816 (QNDRDDLSTGRKSDD). Residues 850-914 (ALIAKTMKRK…YKRKKLEKEL (65 aa)) adopt a coiled-coil conformation. Residues 916–965 (AELSARSTGRGHSQPPFIRTKSQMSEVTESSRQNTPRMRGQSSVEQRVSV) form a disordered region. Polar residues predominate over residues 935 to 951 (TKSQMSEVTESSRQNTP). Low complexity predominate over residues 956 to 965 (QSSVEQRVSV). In terms of domain architecture, CKK spans 972-1109 (THKLYAKTVT…RIPHSGTPAH (138 aa)).

The protein belongs to the CAMSAP1 family. In terms of assembly, interacts with dapk-1. Expressed in larval and adult epidermis, intestine and pharynx. Broadly expressed in the nervous system. Expressed in body wall muscle cells.

The protein localises to the cell projection. It is found in the axon. It localises to the dendrite. The protein resides in the cell membrane. Its subcellular location is the sarcolemma. The protein localises to the cytoplasm. It is found in the cytosol. It localises to the cytoskeleton. The protein resides in the perikaryon. Its function is as follows. Required for microtubule stability and anchorage by binding to the minus ends of microtubules. Acts redundantly with noca-1 to control circumferential microtubule assembly along the body which is necessary for larval development, viability, morphology and integrity of the epidermis. Promotes microtubule stability and polymerization in neurons. Involved in the maintenance of neurite morphology in ALM and PLM neurons. May play a role in synaptic protein localization in the PLM neuron. May act upstream of dlk-1 in neuronal regeneration. Plays a role in postembryonic epidermal tissue integrity and wound healing. The polypeptide is Patronin (microtubule-binding protein) homolog (Caenorhabditis elegans).